The chain runs to 645 residues: MVLAMASQDVQNFFQPFSSWISRVYEALQQAGDMLSASLVNISKQDSKLSDKLDQDLDNIQIQETYFEDEEQDNDWSQEDANSLFLEVDHFSCCNSDLQDSAQNSSPSLSQHAKDSCSTMSQWPNWASDDRKLPHVLSSIAEEEHHLEKQRSGLQHGFDSQLPGTLETVNGKKQVNSFGDDEELSTSSDSDEEVIKQFEISVSRSQSFRSVTSEKGKQTGLEQKPKFSRSLLTHGEDGTEVSACEDLDGASQRRYSENLSYGEDDHIPAHSQSPCERGDAKHHGTSHQESSVVQSLRRQSTEGSLEMETAFNSRGFEDSYATDSSSMWSPEEQDRTNLQVPSGVSEPISKCGDLDVIFEYRAASQKLTVTIVRAQGLPDKDRSGVNSWQVHVVLLPGKKHRGRTNIQRGPNPVFREKVTFAKLEPRDVAACAVRFRLYAARKMTRERMMGEKLFYLSHLHPEGEMKVTLVLEPRSNISSGGSPLSPSAVSHSDSTSSTQSLSHGGAPELLVGLSYNATTGRLSVEMIKGSHFRNLAVNRAPDTYGKLFLLNSVGQEMSRCKTSIRRGQPNPVYKETFVFQVALFQLSDVTLMISVYNRRTMKRKEMIGWIALGQNSSGEEEQDHWEEMKETKGQQICRWHTLLES.

Disordered stretches follow at residues 102-121 (AQNS…STMS), 144-192 (EHHL…DSDE), and 206-344 (QSFR…PSGV). Polar residues predominate over residues 167–177 (ETVNGKKQVNS). Acidic residues predominate over residues 179 to 192 (GDDEELSTSSDSDE). Polar residues predominate over residues 287-303 (HQESSVVQSLRRQSTEG). The C2 1 domain maps to 350 to 469 (KCGDLDVIFE…HPEGEMKVTL (120 aa)). The tract at residues 478-503 (SSGGSPLSPSAVSHSDSTSSTQSLSH) is disordered. Positions 485-502 (SPSAVSHSDSTSSTQSLS) are enriched in low complexity. The C2 2 domain maps to 505 to 640 (GAPELLVGLS…TKGQQICRWH (136 aa)).

It belongs to the synaptotagmin family. Homodimer. Can also form heterodimers. As to expression, expressed in brain.

Functionally, may be involved in the trafficking and exocytosis of secretory vesicles in non-neuronal tissues. Is Ca(2+)-independent. The sequence is that of Synaptotagmin-16 (SYT16) from Homo sapiens (Human).